A 950-amino-acid chain; its full sequence is MADLSLLQEDLQEDADGFGVDDYSSESDVIIIPSALDFVSQDEMLTPLGRLDKYAASENIFNRQMVARSLLDTLREVCDDERDCIAVLERISRLADDSEPTVRAELMEQVPHIALFCQENRPSIPYAFSKFLLPIVVRYLADQNNQVRKTSQAALLALLEQELIERFDVETKVCPVLIELTAPDSNDDVKTEAVAIMCKMAPMVGKDITERLILPRFCEMCCDCRMFHVRKVCAANFGDICSVVGQQATEEMLLPRFFQLCSDNVWGVRKACAECFMAVSCATCQEIRRTKLSALFINLISDPSRWVRQAAFQSLGPFISTFANPSSSGQYFKEESKSSEEMSVENKNRTRDQEAPEDVQVRPEDTPSDLSVSNSSVILENTMEDHAAEASGKPLGEISVPLDSSLLCTLSSESHQEAASNENDKKPGNYKSMLRPEVGTTSQDSALLDQELYNSFHFWRTPLPEIDLDIELEQNSGGKPSPEGPEEESEGPVPSSPNITMATRKELEEMIENLEPHIDDPDVKAQVEVLSAALRASSLDAHEETISIEKRSDLQDELDINELPNCKINQEDSVPLISDAVENMDSTLHYIHSDSDLSNNSSFSPDEERRTKVQDVVPQALLDQYLSMTDPSRAQTVDTEIAKHCAYSLPGVALTLGRQNWHCLRETYETLASDMQWKVRRTLAFSIHELAVILGDQLTAADLVPIFNGFLKDLDEVRIGVLKHLHDFLKLLHIDKRREYLYQLQEFLVTDNSRNWRFRAELAEQLILLLELYSPRDVYDYLRPIALNLCADKVSSVRWISYKLVSEMVKKLHAATPPTFGVDLINELVENFGRCPKWSGRQAFVFVCQTVIEDDCLPMDQFAVHLMPHLLTLANDRVPNVRVLLAKTLRQTLLEKDYFLASASCHQEAVEQTIMALQMDRDSDVKYFASIHPASTKISEDAMSTASSTY.

HEAT repeat units follow at residues 1-25 (MADLSLLQEDLQEDADGFGVDDYSS), 26-63 (ESDVIIIPSALDFVSQDEMLTPLGRLDKYAASENIFNR), 65-81 (MVARSLLDTLREVCDDE), 82-119 (RDCIAVLERISRLADDSEPTVRAELMEQVPHIALFCQE), 127-164 (AFSKFLLPIVVRYLADQNNQVRKTSQAALLALLEQELI), 168-206 (DVETKVCPVLIELTAPDSNDDVKTEAVAIMCKMAPMVGK), 208-246 (ITERLILPRFCEMCCDCRMFHVRKVCAANFGDICSVVGQ), 248-285 (ATEEMLLPRFFQLCSDNVWGVRKACAECFMAVSCATCQ), and 287-324 (IRRTKLSALFINLISDPSRWVRQAAFQSLGPFISTFAN). Disordered stretches follow at residues 326 to 374 (SSSG…SVSN), 413 to 438 (ESHQEAASNENDKKPGNYKSMLRPEV), and 473 to 499 (EQNSGGKPSPEGPEEESEGPVPSSPNI). The span at 332–365 (FKEESKSSEEMSVENKNRTRDQEAPEDVQVRPED) shows a compositional bias: basic and acidic residues. 5 HEAT repeats span residues 505 to 542 (KELEEMIENLEPHIDDPDVKAQVEVLSAALRASSLDAH), 568 to 606 (INQEDSVPLISDAVENMDSTLHYIHSDSDLSNNSSFSPD), 698 to 734 (LTAADLVPIFNGFLKDLDEVRIGVLKHLHDFLKLLHI), 799 to 837 (WISYKLVSEMVKKLHAATPPTFGVDLINELVENFGRCPK), and 861 to 898 (QFAVHLMPHLLTLANDRVPNVRVLLAKTLRQTLLEKDY). A Phosphoserine modification is found at S935.

As to quaternary structure, serine/threonine-protein phosphatase 4 (PP4) occurs in different assemblies of the catalytic and one or more regulatory subunits. Component of the PP4 complex PPP4C-PPP4R1. Interacts with HDAC3. (Microbial infection) Interacts with merkel polyomavirus small tumor antigen; this interaction bridges small tumor antigen with NEMO to inhibit NF-kappa-B. As to expression, widely expressed with high expression in cultured mesangial cells. Isoform 1 and isoform 2 are expressed in renal tissues.

Regulatory subunit of serine/threonine-protein phosphatase 4. May play a role in regulation of cell division in renal glomeruli. The PPP4C-PPP4R1 PP4 complex may play a role in dephosphorylation and regulation of HDAC3. Plays a role in the inhibition of TNF-induced NF-kappa-B activation by regulating the dephosphorylation of TRAF2. Functionally, (Microbial infection) Participates in merkel polyomavirus-mediated inhibition of NF-kappa-B by bridging viral small tumor antigen with NEMO. The protein is Serine/threonine-protein phosphatase 4 regulatory subunit 1 (PPP4R1) of Homo sapiens (Human).